A 229-amino-acid chain; its full sequence is Meiotically up-regulated gene 31 protein (229 aa).

Disordered stretches follow at residues 16–68 and 189–229; these read EDSA…EEDK and GLPE…TTWA.

It is found in the endoplasmic reticulum. Functionally, has a role in meiosis. The chain is Meiotically up-regulated gene 31 protein (mug31) from Schizosaccharomyces pombe (strain 972 / ATCC 24843) (Fission yeast).